The chain runs to 121 residues: Parathyroid hormone 4 (121 aa).

Positions methionine 1 to cysteine 24 are cleaved as a signal peptide. Positions glutamine 25 to serine 29 are excised as a propeptide. Residues arginine 77 to lysine 97 form a disordered region.

Belongs to the parathyroid hormone family. Specifically expressed in a bilateral cluster of neurons in the dorsal region of the periventricular hypothalamus. Their axons project through the midbrain and hindbrain and down the spinal cord.

It localises to the secreted. Its function is as follows. Neuroendocrine peptide which is produced by a subset of neurons in the hypothalamus. Activates the G-protein coupled receptors pth1ra, pth1rb and pth2r with similar affinity. Receptor binding stimulates intracellular cAMP production. Plays a role in bone mineralization by regulating expression of factors involved in phosphate homeostasis. Important for embryonic bone development. The chain is Parathyroid hormone 4 from Danio rerio (Zebrafish).